Consider the following 182-residue polypeptide: MQTEHVILLNAQGVPTGTLEKYAAHTADTLLHLAFSSWLFNAKGQLLVTRRALSKKAWPGVWTNSVCGHPQLGESNEDAVIRRCRYELGVEITPPESIYPDFRYRATDPSGIVENEVCPVFAARTTSALQINDDEVMDYQWCDLADVLHGIDATPWAFSPWMVMQAANSEARKLLSAFAQHN.

Mn(2+) contacts are provided by His25 and His32. A Nudix hydrolase domain is found at 30-164; that stretch reads LLHLAFSSWL…PWAFSPWMVM (135 aa). Cys67 is a catalytic residue. His69 is a Mn(2+) binding site. Glu87 provides a ligand contact to Mg(2+). Positions 114 and 116 each coordinate Mn(2+). Glu116 is a catalytic residue.

It belongs to the IPP isomerase type 1 family. In terms of assembly, homodimer. Requires Mg(2+) as cofactor. The cofactor is Mn(2+).

The protein localises to the cytoplasm. The catalysed reaction is isopentenyl diphosphate = dimethylallyl diphosphate. Its pathway is isoprenoid biosynthesis; dimethylallyl diphosphate biosynthesis; dimethylallyl diphosphate from isopentenyl diphosphate: step 1/1. Its function is as follows. Catalyzes the 1,3-allylic rearrangement of the homoallylic substrate isopentenyl (IPP) to its highly electrophilic allylic isomer, dimethylallyl diphosphate (DMAPP). This Escherichia coli (strain ATCC 8739 / DSM 1576 / NBRC 3972 / NCIMB 8545 / WDCM 00012 / Crooks) protein is Isopentenyl-diphosphate Delta-isomerase.